A 217-amino-acid chain; its full sequence is Small ribosomal subunit protein uS3 (217 aa).

One can recognise a KH type-2 domain in the interval 38-106 (IRQLIQTKLA…QVHINIVEIK (69 aa)).

It belongs to the universal ribosomal protein uS3 family. Part of the 30S ribosomal subunit. Forms a tight complex with proteins S10 and S14.

Functionally, binds the lower part of the 30S subunit head. Binds mRNA in the 70S ribosome, positioning it for translation. The protein is Small ribosomal subunit protein uS3 of Lactococcus lactis subsp. cremoris (strain MG1363).